A 701-amino-acid polypeptide reads, in one-letter code: MSCPYPFKVFSCTVSRHSHQAACVVAKTQATSQPRGALSPGGGFLAALALSVTGWRIGSKGHIVAQKTSTPPPDTIQAGDMITDFDQYLLGEGTHRQLWRVLGAHVQDDATHFAVWAPNARAVSVTGDFNGWSGTEMTAVGQTGVWQVRIPGVGDGALYKYQITDANGALREKADPVGFGAQHPPEQASVVRDIRGYGWRDGAWMETRAEAADRAAPISIYEVHLGSWRRKWDDGGRPLSYKEAAQDLVGYVRHMGFTHIELMPISEFPFDGSWGYQPVGLYAPTIRFGPPHEFRDLVDAAHAAGLGVLLDWVPGHFPTDEHGLATFDGTHLYEHADPKEGFHQDWNTLIFNYGRTEVRNYLVANALYWMEEYHLDGLRVDAVASMLYRDYSRDEGQWVPNKDGGRENLEAISFLQEMNVAVYGADASVMTVAEESTSFPGVSQPVHTGGLGFGYKWNMGWMNDTLSYMALDPIHRQHHHSQMTNPIMWQYSENFILPISHDEVVHGKGSMLEKMPGNDWEKLANLRAYYGYMWMHPGKKLIFMGCEFAQPGEWSHDGDLNWDAASRPAHAGVQALVRDLNHLYRDTPALHVKDCMPDGFAWICNDPAQSTLGFARFGAAGDAPVVVMCNFTPVERVAFRMGVPTPGEWDEVLNTDAAAYGGGNRGNLGGVLSEPTPCDGHAQSVTLTLPPLSTVVLRLKD.

The active-site Nucleophile is the Asp-381. Glu-434 (proton donor) is an active-site residue.

Belongs to the glycosyl hydrolase 13 family. GlgB subfamily. In terms of assembly, monomer.

It carries out the reaction Transfers a segment of a (1-&gt;4)-alpha-D-glucan chain to a primary hydroxy group in a similar glucan chain.. It participates in glycan biosynthesis; glycogen biosynthesis. Catalyzes the formation of the alpha-1,6-glucosidic linkages in glycogen by scission of a 1,4-alpha-linked oligosaccharide from growing alpha-1,4-glucan chains and the subsequent attachment of the oligosaccharide to the alpha-1,6 position. The protein is 1,4-alpha-glucan branching enzyme GlgB of Jannaschia sp. (strain CCS1).